The following is a 488-amino-acid chain: Protein nucleotidyltransferase YdiU (488 aa).

8 residues coordinate ATP: G91, G93, R94, K114, D126, G127, R177, and R184. The active-site Proton acceptor is the D253. 2 residues coordinate Mg(2+): N254 and D263. D263 serves as a coordination point for ATP.

Belongs to the SELO family. The cofactor is Mg(2+). Mn(2+) serves as cofactor.

It carries out the reaction L-seryl-[protein] + ATP = 3-O-(5'-adenylyl)-L-seryl-[protein] + diphosphate. The enzyme catalyses L-threonyl-[protein] + ATP = 3-O-(5'-adenylyl)-L-threonyl-[protein] + diphosphate. The catalysed reaction is L-tyrosyl-[protein] + ATP = O-(5'-adenylyl)-L-tyrosyl-[protein] + diphosphate. It catalyses the reaction L-histidyl-[protein] + UTP = N(tele)-(5'-uridylyl)-L-histidyl-[protein] + diphosphate. It carries out the reaction L-seryl-[protein] + UTP = O-(5'-uridylyl)-L-seryl-[protein] + diphosphate. The enzyme catalyses L-tyrosyl-[protein] + UTP = O-(5'-uridylyl)-L-tyrosyl-[protein] + diphosphate. Nucleotidyltransferase involved in the post-translational modification of proteins. It can catalyze the addition of adenosine monophosphate (AMP) or uridine monophosphate (UMP) to a protein, resulting in modifications known as AMPylation and UMPylation. The protein is Protein nucleotidyltransferase YdiU of Bacillus cereus (strain ATCC 14579 / DSM 31 / CCUG 7414 / JCM 2152 / NBRC 15305 / NCIMB 9373 / NCTC 2599 / NRRL B-3711).